The following is a 241-amino-acid chain: 1-(5-phosphoribosyl)-5-[(5-phosphoribosylamino)methylideneamino] imidazole-4-carboxamide isomerase (241 aa).

The active-site Proton acceptor is the D10. The active-site Proton donor is the D129.

It belongs to the HisA/HisF family.

The protein resides in the cytoplasm. The enzyme catalyses 1-(5-phospho-beta-D-ribosyl)-5-[(5-phospho-beta-D-ribosylamino)methylideneamino]imidazole-4-carboxamide = 5-[(5-phospho-1-deoxy-D-ribulos-1-ylimino)methylamino]-1-(5-phospho-beta-D-ribosyl)imidazole-4-carboxamide. It participates in amino-acid biosynthesis; L-histidine biosynthesis; L-histidine from 5-phospho-alpha-D-ribose 1-diphosphate: step 4/9. This is 1-(5-phosphoribosyl)-5-[(5-phosphoribosylamino)methylideneamino] imidazole-4-carboxamide isomerase from Salinispora tropica (strain ATCC BAA-916 / DSM 44818 / JCM 13857 / NBRC 105044 / CNB-440).